Consider the following 150-residue polypeptide: UPF0178 protein ECA0873 (150 aa).

This sequence belongs to the UPF0178 family.

This chain is UPF0178 protein ECA0873, found in Pectobacterium atrosepticum (strain SCRI 1043 / ATCC BAA-672) (Erwinia carotovora subsp. atroseptica).